The sequence spans 561 residues: Glucose-6-phosphate isomerase (561 aa).

Residues 171–172 (GS), 222–227 (SKTFTT), Gln-366, Glu-370, His-401, and Lys-525 each bind D-glucose 6-phosphate. Glu-370 functions as the Proton donor in the catalytic mechanism. Residues His-401 and Lys-525 contribute to the active site.

This sequence belongs to the GPI family. In terms of assembly, homodimer.

The protein resides in the cytoplasm. It localises to the cytosol. It catalyses the reaction alpha-D-glucose 6-phosphate = beta-D-fructose 6-phosphate. The protein operates within carbohydrate degradation; glycolysis; D-glyceraldehyde 3-phosphate and glycerone phosphate from D-glucose: step 2/4. In the cytoplasm, catalyzes the conversion of glucose-6-phosphate to fructose-6-phosphate, the second step in glycolysis, and the reverse reaction during gluconeogenesis. The sequence is that of Glucose-6-phosphate isomerase (pgi-1) from Neurospora crassa (strain ATCC 24698 / 74-OR23-1A / CBS 708.71 / DSM 1257 / FGSC 987).